The chain runs to 207 residues: Negative modulator of initiation of replication (207 aa).

Residues 43 to 54 (ATPITSSVTPSA) show a composition bias toward polar residues. The tract at residues 43-63 (ATPITSSVTPSAPRQEAVNDE) is disordered.

This sequence belongs to the SeqA family. As to quaternary structure, homodimer. Polymerizes to form helical filaments.

It localises to the cytoplasm. Functionally, negative regulator of replication initiation, which contributes to regulation of DNA replication and ensures that replication initiation occurs exactly once per chromosome per cell cycle. Binds to pairs of hemimethylated GATC sequences in the oriC region, thus preventing assembly of replication proteins and re-initiation at newly replicated origins. Repression is relieved when the region becomes fully methylated. This is Negative modulator of initiation of replication from Psychromonas ingrahamii (strain DSM 17664 / CCUG 51855 / 37).